We begin with the raw amino-acid sequence, 111 residues long: Nucleoid-associated protein lhv_0401 (111 aa).

This sequence belongs to the YbaB/EbfC family. In terms of assembly, homodimer.

It is found in the cytoplasm. It localises to the nucleoid. Its function is as follows. Binds to DNA and alters its conformation. May be involved in regulation of gene expression, nucleoid organization and DNA protection. The chain is Nucleoid-associated protein lhv_0401 from Lactobacillus helveticus (strain DPC 4571).